We begin with the raw amino-acid sequence, 646 residues long: ATP-dependent zinc metalloprotease FtsH (646 aa).

The Cytoplasmic segment spans residues 1-4 (MTRS). A helical transmembrane segment spans residues 5–25 (LLWQMVIVLGAILMVNYVLTT). Over 26-120 (LTPQTQEPVV…VRPESKPSPW (95 aa)) the chain is Periplasmic. A helical transmembrane segment spans residues 121–141 (ATAMIYMLPWLLIVGVWWFVI). At 142 to 646 (KGMRTRQGPG…GELAGGAVEG (505 aa)) the chain is on the cytoplasmic side. Residue 216–223 (GPPGTGKT) participates in ATP binding. H437 serves as a coordination point for Zn(2+). Residue E438 is part of the active site. Zn(2+) contacts are provided by H441 and D513.

This sequence in the central section; belongs to the AAA ATPase family. In the C-terminal section; belongs to the peptidase M41 family. Homohexamer. Requires Zn(2+) as cofactor.

Its subcellular location is the cell inner membrane. Its function is as follows. Acts as a processive, ATP-dependent zinc metallopeptidase for both cytoplasmic and membrane proteins. Plays a role in the quality control of integral membrane proteins. This chain is ATP-dependent zinc metalloprotease FtsH, found in Syntrophotalea carbinolica (strain DSM 2380 / NBRC 103641 / GraBd1) (Pelobacter carbinolicus).